The chain runs to 307 residues: MIQSHVSVMLNKMLEALSPKAGESYLDCTFGAGGYSKAILESCNCYVTALDRDPNVIKRAEEIQQNYGERFDFVETNFAGSFAKLKEKKFDGIVLDLGVSSMQLDIADRGFSFLHDGPLDMRMSGQGLSAEEFVNAAEAKELADVIYKYGDESFSRRIAKRIVEYRKTARIDSTGKLAEIVRSSIGFRKGKIDPATKTFQAIRIYVNDELGELEQFLVNVKNILKKDGRLVVVSFHSLEDRIVKNFFKENSEKPVVRSKYAKDDMTIDPNKWLKIITNKALAPSDKEVGLNIRARSAKLRAAKAIYE.

S-adenosyl-L-methionine contacts are provided by residues 33-35 (GGY), Asp-51, Phe-82, Asp-96, and Gln-103.

This sequence belongs to the methyltransferase superfamily. RsmH family.

It is found in the cytoplasm. It catalyses the reaction cytidine(1402) in 16S rRNA + S-adenosyl-L-methionine = N(4)-methylcytidine(1402) in 16S rRNA + S-adenosyl-L-homocysteine + H(+). Functionally, specifically methylates the N4 position of cytidine in position 1402 (C1402) of 16S rRNA. The protein is Ribosomal RNA small subunit methyltransferase H of Rickettsia peacockii (strain Rustic).